A 1569-amino-acid polypeptide reads, in one-letter code: Pentafunctional AROM polypeptide (1569 aa).

The 3-dehydroquinate synthase stretch occupies residues 1–382; the sequence is MAEAKKPGPE…HEPRASVVDD (382 aa). Residues 49–51, 84–87, 115–117, and aspartate 120 contribute to the NAD(+) site; these read DTN, EASK, and GGV. Arginine 131 provides a ligand contact to 7-phospho-2-dehydro-3-deoxy-D-arabino-heptonate. 140–141 serves as a coordination point for NAD(+); the sequence is TT. 7-phospho-2-dehydro-3-deoxy-D-arabino-heptonate contacts are provided by aspartate 147 and lysine 153. Lysine 162 contacts NAD(+). A 7-phospho-2-dehydro-3-deoxy-D-arabino-heptonate-binding site is contributed by asparagine 163. NAD(+) is bound by residues 180–183 and asparagine 191; that span reads FLET. Zn(2+) is bound at residue glutamate 195. Residues 195–198 and lysine 248 each bind 7-phospho-2-dehydro-3-deoxy-D-arabino-heptonate; that span reads EVVK. Glutamate 258 serves as the catalytic Proton acceptor; for 3-dehydroquinate synthase activity. 7-phospho-2-dehydro-3-deoxy-D-arabino-heptonate is bound by residues 262 to 266 and histidine 269; that span reads RNLLN. Histidine 269 serves as a coordination point for Zn(2+). Residue histidine 273 is the Proton acceptor; for 3-dehydroquinate synthase activity of the active site. Residues histidine 285 and lysine 354 each coordinate 7-phospho-2-dehydro-3-deoxy-D-arabino-heptonate. Residue histidine 285 coordinates Zn(2+). The interval 395–837 is EPSP synthase; it reads VTPGVPSNLD…WDILSQAFKV (443 aa). The active-site For EPSP synthase activity is the cysteine 819. The tract at residues 859–1053 is shikimate kinase; it reads ERSVFIIGMR…MEKDHSFFVS (195 aa). 866–873 contacts ATP; it reads GMRGAGKT. The interval 1054–1267 is 3-dehydroquinase; the sequence is LTVPDVSEAA…AAPGQMSAAE (214 aa). The Proton acceptor; for 3-dehydroquinate dehydratase activity role is filled by histidine 1170. The Schiff-base intermediate with substrate; for 3-dehydroquinate dehydratase activity role is filled by lysine 1198. The segment at 1280 to 1569 is shikimate dehydrogenase; that stretch reads PCNFYLFGKP…RDARSAVLGL (290 aa).

The protein in the N-terminal section; belongs to the sugar phosphate cyclases superfamily. Dehydroquinate synthase family. This sequence in the 2nd section; belongs to the EPSP synthase family. It in the 3rd section; belongs to the shikimate kinase family. In the 4th section; belongs to the type-I 3-dehydroquinase family. The protein in the C-terminal section; belongs to the shikimate dehydrogenase family. In terms of assembly, homodimer. The cofactor is Zn(2+).

It is found in the cytoplasm. The enzyme catalyses 7-phospho-2-dehydro-3-deoxy-D-arabino-heptonate = 3-dehydroquinate + phosphate. It carries out the reaction 3-dehydroquinate = 3-dehydroshikimate + H2O. The catalysed reaction is shikimate + NADP(+) = 3-dehydroshikimate + NADPH + H(+). It catalyses the reaction shikimate + ATP = 3-phosphoshikimate + ADP + H(+). The enzyme catalyses 3-phosphoshikimate + phosphoenolpyruvate = 5-O-(1-carboxyvinyl)-3-phosphoshikimate + phosphate. Its pathway is metabolic intermediate biosynthesis; chorismate biosynthesis; chorismate from D-erythrose 4-phosphate and phosphoenolpyruvate: step 2/7. The protein operates within metabolic intermediate biosynthesis; chorismate biosynthesis; chorismate from D-erythrose 4-phosphate and phosphoenolpyruvate: step 3/7. It participates in metabolic intermediate biosynthesis; chorismate biosynthesis; chorismate from D-erythrose 4-phosphate and phosphoenolpyruvate: step 4/7. It functions in the pathway metabolic intermediate biosynthesis; chorismate biosynthesis; chorismate from D-erythrose 4-phosphate and phosphoenolpyruvate: step 5/7. Its pathway is metabolic intermediate biosynthesis; chorismate biosynthesis; chorismate from D-erythrose 4-phosphate and phosphoenolpyruvate: step 6/7. In terms of biological role, the AROM polypeptide catalyzes 5 consecutive enzymatic reactions in prechorismate polyaromatic amino acid biosynthesis. In Fusarium vanettenii (strain ATCC MYA-4622 / CBS 123669 / FGSC 9596 / NRRL 45880 / 77-13-4) (Fusarium solani subsp. pisi), this protein is Pentafunctional AROM polypeptide.